A 160-amino-acid polypeptide reads, in one-letter code: Cytochrome b6-f complex subunit 4 (160 aa).

The next 4 helical transmembrane spans lie at 36–56 (LLYI…GLAV), 68–88 (PFAT…FQIL), 95–115 (FFGV…PFLE), and 131–151 (SVFL…VLPI).

The protein belongs to the cytochrome b family. PetD subfamily. As to quaternary structure, the 4 large subunits of the cytochrome b6-f complex are cytochrome b6, subunit IV (17 kDa polypeptide, petD), cytochrome f and the Rieske protein, while the 4 small subunits are petG, petL, petM and petN. The complex functions as a dimer.

Its subcellular location is the plastid. It is found in the chloroplast thylakoid membrane. Component of the cytochrome b6-f complex, which mediates electron transfer between photosystem II (PSII) and photosystem I (PSI), cyclic electron flow around PSI, and state transitions. The sequence is that of Cytochrome b6-f complex subunit 4 from Welwitschia mirabilis (Tree tumbo).